Consider the following 226-residue polypeptide: Leucyl/phenylalanyl-tRNA--protein transferase (226 aa).

This sequence belongs to the L/F-transferase family.

The protein resides in the cytoplasm. The enzyme catalyses N-terminal L-lysyl-[protein] + L-leucyl-tRNA(Leu) = N-terminal L-leucyl-L-lysyl-[protein] + tRNA(Leu) + H(+). It catalyses the reaction N-terminal L-arginyl-[protein] + L-leucyl-tRNA(Leu) = N-terminal L-leucyl-L-arginyl-[protein] + tRNA(Leu) + H(+). The catalysed reaction is L-phenylalanyl-tRNA(Phe) + an N-terminal L-alpha-aminoacyl-[protein] = an N-terminal L-phenylalanyl-L-alpha-aminoacyl-[protein] + tRNA(Phe). In terms of biological role, functions in the N-end rule pathway of protein degradation where it conjugates Leu, Phe and, less efficiently, Met from aminoacyl-tRNAs to the N-termini of proteins containing an N-terminal arginine or lysine. The protein is Leucyl/phenylalanyl-tRNA--protein transferase of Pseudomonas aeruginosa (strain UCBPP-PA14).